A 132-amino-acid polypeptide reads, in one-letter code: Small ribosomal subunit protein uS8 (132 aa).

The protein belongs to the universal ribosomal protein uS8 family. Part of the 30S ribosomal subunit. Contacts proteins S5 and S12.

Its function is as follows. One of the primary rRNA binding proteins, it binds directly to 16S rRNA central domain where it helps coordinate assembly of the platform of the 30S subunit. The protein is Small ribosomal subunit protein uS8 of Corynebacterium jeikeium (strain K411).